Here is a 96-residue protein sequence, read N- to C-terminus: Putative septation protein SpoVG (96 aa).

Belongs to the SpoVG family.

In terms of biological role, could be involved in septation. This is Putative septation protein SpoVG from Phytoplasma australiense.